A 288-amino-acid polypeptide reads, in one-letter code: Eukaryotic translation initiation factor 3 subunit F-2 (288 aa).

Residues 12-149 (VLLHPLVLFQ…TRIFCAVATG (138 aa)) form the MPN domain.

The protein belongs to the eIF-3 subunit F family. In terms of assembly, component of the eukaryotic translation initiation factor 3 (eIF-3) complex. The eIF-3 complex interacts with pix.

Its subcellular location is the cytoplasm. Its function is as follows. Component of the eukaryotic translation initiation factor 3 (eIF-3) complex, which is involved in protein synthesis of a specialized repertoire of mRNAs and, together with other initiation factors, stimulates binding of mRNA and methionyl-tRNAi to the 40S ribosome. The eIF-3 complex specifically targets and initiates translation of a subset of mRNAs involved in cell proliferation. This is Eukaryotic translation initiation factor 3 subunit F-2 from Drosophila pseudoobscura pseudoobscura (Fruit fly).